A 233-amino-acid chain; its full sequence is Cilia- and flagella-associated protein 299 (233 aa).

It is found in the cytoplasm. The protein resides in the nucleus. Functionally, may be involved in spermatogenesis. The polypeptide is Cilia- and flagella-associated protein 299 (Homo sapiens (Human)).